Reading from the N-terminus, the 207-residue chain is Octanoyltransferase (207 aa).

The BPL/LPL catalytic domain occupies 29 to 204 (DDTADELWLV…ELMVQLGDEE (176 aa)). Substrate-binding positions include 68–75 (RGGQVTYH), 135–137 (SLG), and 148–150 (GVA). The Acyl-thioester intermediate role is filled by Cys166.

This sequence belongs to the LipB family.

It localises to the cytoplasm. It catalyses the reaction octanoyl-[ACP] + L-lysyl-[protein] = N(6)-octanoyl-L-lysyl-[protein] + holo-[ACP] + H(+). It functions in the pathway protein modification; protein lipoylation via endogenous pathway; protein N(6)-(lipoyl)lysine from octanoyl-[acyl-carrier-protein]: step 1/2. In terms of biological role, catalyzes the transfer of endogenously produced octanoic acid from octanoyl-acyl-carrier-protein onto the lipoyl domains of lipoate-dependent enzymes. Lipoyl-ACP can also act as a substrate although octanoyl-ACP is likely to be the physiological substrate. The protein is Octanoyltransferase of Methylococcus capsulatus (strain ATCC 33009 / NCIMB 11132 / Bath).